The following is a 586-amino-acid chain: A-type ATP synthase subunit A (586 aa).

232-239 (GPFGSGKT) provides a ligand contact to ATP.

The protein belongs to the ATPase alpha/beta chains family. As to quaternary structure, has multiple subunits with at least A(3), B(3), C, D, E, F, H, I and proteolipid K(x).

The protein localises to the cell membrane. The enzyme catalyses ATP + H2O + 4 H(+)(in) = ADP + phosphate + 5 H(+)(out). In terms of biological role, component of the A-type ATP synthase that produces ATP from ADP in the presence of a proton gradient across the membrane. The A chain is the catalytic subunit. The sequence is that of A-type ATP synthase subunit A from Methanococcus maripaludis (strain C7 / ATCC BAA-1331).